A 68-amino-acid chain; its full sequence is SSCPGKSSWPHLVGVGGSVAKAIIERQNPNVKAVILEEGTPVTKDFRCNRVRIWVNKRGLVVSPPRIG.

S1 bears the N-acetylserine mark. Cysteines 3 and 48 form a disulfide.

It belongs to the protease inhibitor I13 (potato type I serine protease inhibitor) family.

In terms of biological role, specifically inhibits both trypsin and activated Hageman factor. The polypeptide is Inhibitor of trypsin and hageman factor (Cucurbita maxima (Pumpkin)).